The primary structure comprises 976 residues: MERKVFSGQNLIWVMLLLVQLRGYKCCIEKERKALLELKKYMISKTADWGLDSVLPTWTNDTKSNCCRWEGLKCNQTSGRIIELSIGQTNFKESSLLNLSLLHPFEELRSLNLSGEIYNEFNGLFDDVEGYESLRRLRNLEILDLSSNSFNNSIFPFLNAATSLTTLFIQSNYIGGPLPIKELKNLTKLELLDLSRSGYNGSIPEFTHLEKLKALDLSANDFSSLVELQELKVLTNLEVLGLAWNHLDGPIPKEVFCEMKNLRQLDLRGNYFEGQLPVCLGNLNKLRVLDLSSNQLSGNLPASFNSLESLEYLSLSDNNFEGFFSLNPLANLTKLKVFRLSSTSEMLQVETESNWLPKFQLTVAALPFCSLGKIPNFLVYQTNLRLVDLSSNRLSGDIPTWLLENNPELKVLQLKNNSFTIFQIPTIVHKLQVLDFSANDITGVLPDNIGHVLPRLLHMNGSHNGFQGNLPSSMGEMNDISFLDLSYNNFSGELPRSLLTGCFSLITLQLSHNSFSGPILPIQTRLTSLIVLRMHNNLFTGEIGVGLRTLVNLSIFDASNNRLTGLISSSIPPDSSHLIMLLLSNNLLEGTLPPSLLAIHHLNFLDLSGNLLSGDLPSSVVNSMYGIKIFLHNNSFTGPLPVTLLENAYILDLRNNKLSGSIPQFVNTGKMITLLLRGNNLTGSIPRKLCDLTSIRLLDLSDNKLNGVIPPCLNHLSTELGEGIGLSGFSQEISFGDSLQMEFYRSTFLVDEFMLYYDSTYMIVEIEFAAKQRYDSFSGGTLDYMYGLDLSSNELSGVIPAELGDLSKLRALNLSRNLLSSSIPANFSKLKDIESLDLSYNMLQGNIPHQLTNLTSLAVFNVSFNNLSGIIPQGGQFNTFNDNSYLGNPLLCGTPTDRSCEGKKNTKEADNGGEEEEEDDDDEAAIDMVVLYWTTGSTYAIALIGILVLMCFDCPWRRTWLCIVDAFIASGKSMFS.

An N-terminal signal peptide occupies residues 1-26 (MERKVFSGQNLIWVMLLLVQLRGYKC). At 27–928 (CIEKERKALL…DDDDEAAIDM (902 aa)) the chain is on the extracellular side. Residues Asn60, Asn75, Asn98, Asn112, Asn151, Asn185, and Asn200 are each glycosylated (N-linked (GlcNAc...) asparagine). 17 LRR repeats span residues 105–127 (FEELRSLNLSGEIYNEFNGLFDD), 137–160 (LRNLEILDLSSNSFNNSIFPFLNA), 162–185 (TSLTTLFIQSNYIGGPLPIKELKN), 186–209 (LTKLELLDLSRSGYNGSIPEFTHL), 210–233 (EKLKALDLSANDFSSLVELQELKV), 234–258 (LTNLEVLGLAWNHLDGPIPKEVFCE), 260–283 (KNLRQLDLRGNYFEGQLPVCLGNL), 284–306 (NKLRVLDLSSNQLSGNLPASFNS), 308–331 (ESLEYLSLSDNNFEGFFSLNPLAN), 333–358 (TKLKVFRLSSTSEMLQVETESNWLPK), 359–381 (FQLTVAALPFCSLGKIPNFLVYQ), 382–405 (TNLRLVDLSSNRLSGDIPTWLLEN), 407–428 (PELKVLQLKNNSFTIFQIPTIV), 429–452 (HKLQVLDFSANDITGVLPDNIGHV), 454–477 (PRLLHMNGSHNGFQGNLPSSMGEM), 478–501 (NDISFLDLSYNNFSGELPRSLLTG), and 503–528 (FSLITLQLSHNSFSGPILPIQTRLTS). Asn331 is a glycosylation site (N-linked (GlcNAc...) asparagine). Asn416 carries N-linked (GlcNAc...) asparagine glycosylation. Asn460 and Asn489 each carry an N-linked (GlcNAc...) asparagine glycan. An LRR 18; degenerate repeat occupies 530–549 (IVLRMHNNLFTGEIGVGLRT). LRR repeat units lie at residues 550 to 573 (LVNLSIFDASNNRLTGLISSSIPP), 575 to 599 (SSHLIMLLLSNNLLEGTLPPSLLAI), 600 to 623 (HHLNFLDLSGNLLSGDLPSSVVNS), 625 to 645 (YGIKIFLHNNSFTGPLPVTLL), 646 to 669 (ENAYILDLRNNKLSGSIPQFVNTG), 671 to 692 (MITLLLRGNNLTGSIPRKLCDL), 693 to 715 (TSIRLLDLSDNKLNGVIPPCLNH), 782 to 805 (LDYMYGLDLSSNELSGVIPAELGD), 806 to 829 (LSKLRALNLSRNLLSSSIPANFSK), 831 to 854 (KDIESLDLSYNMLQGNIPHQLTNL), and 856 to 879 (SLAVFNVSFNNLSGIIPQGGQFNT). An N-linked (GlcNAc...) asparagine glycan is attached at Asn552. An N-linked (GlcNAc...) asparagine glycan is attached at Asn633. N-linked (GlcNAc...) asparagine glycosylation is present at Asn680. Asn813, Asn826, Asn853, Asn861, and Asn866 each carry an N-linked (GlcNAc...) asparagine glycan. The disordered stretch occupies residues 897–922 (DRSCEGKKNTKEADNGGEEEEEDDDD). The span at 898–910 (RSCEGKKNTKEAD) shows a compositional bias: basic and acidic residues. The segment covering 911–922 (NGGEEEEEDDDD) has biased composition (acidic residues). The chain crosses the membrane as a helical span at residues 929–949 (VVLYWTTGSTYAIALIGILVL). At 950 to 976 (MCFDCPWRRTWLCIVDAFIASGKSMFS) the chain is on the cytoplasmic side.

The protein belongs to the RLP family.

The protein localises to the cell membrane. The protein is Receptor-like protein 14 of Arabidopsis thaliana (Mouse-ear cress).